The sequence spans 466 residues: Asparagine--tRNA ligase (466 aa).

Belongs to the class-II aminoacyl-tRNA synthetase family. As to quaternary structure, homodimer.

The protein localises to the cytoplasm. It catalyses the reaction tRNA(Asn) + L-asparagine + ATP = L-asparaginyl-tRNA(Asn) + AMP + diphosphate + H(+). The polypeptide is Asparagine--tRNA ligase (Xylella fastidiosa (strain 9a5c)).